The following is a 310-amino-acid chain: HPr kinase/phosphorylase (310 aa).

Active-site residues include histidine 138 and lysine 159. 153-160 is a binding site for ATP; the sequence is GDSGIGKS. Residue serine 160 coordinates Mg(2+). Aspartate 177 (proton acceptor; for phosphorylation activity. Proton donor; for dephosphorylation activity) is an active-site residue. The segment at 201–210 is important for the catalytic mechanism of both phosphorylation and dephosphorylation; that stretch reads LEIRGVGIID. Glutamate 202 is a binding site for Mg(2+). Residue arginine 243 is part of the active site. The segment at 264–269 is important for the catalytic mechanism of dephosphorylation; it reads PVKTGR.

Belongs to the HPrK/P family. As to quaternary structure, homohexamer. It depends on Mg(2+) as a cofactor.

It catalyses the reaction [HPr protein]-L-serine + ATP = [HPr protein]-O-phospho-L-serine + ADP + H(+). It carries out the reaction [HPr protein]-O-phospho-L-serine + phosphate + H(+) = [HPr protein]-L-serine + diphosphate. Catalyzes the ATP- as well as the pyrophosphate-dependent phosphorylation of a specific serine residue in HPr, a phosphocarrier protein of the phosphoenolpyruvate-dependent sugar phosphotransferase system (PTS). HprK/P also catalyzes the pyrophosphate-producing, inorganic phosphate-dependent dephosphorylation (phosphorolysis) of seryl-phosphorylated HPr (P-Ser-HPr). The two antagonistic activities of HprK/P are regulated by several intracellular metabolites, which change their concentration in response to the absence or presence of rapidly metabolisable carbon sources (glucose, fructose, etc.) in the growth medium. Therefore, by controlling the phosphorylation state of HPr, HPrK/P is a sensor enzyme that plays a major role in the regulation of carbon metabolism and sugar transport: it mediates carbon catabolite repression (CCR), and regulates PTS-catalyzed carbohydrate uptake and inducer exclusion. This Streptococcus uberis (strain ATCC BAA-854 / 0140J) protein is HPr kinase/phosphorylase.